A 227-amino-acid polypeptide reads, in one-letter code: uncharacterized protein (227 aa).

The region spanning 3 to 119 (RADFCIIGLG…STMGIREALI (117 aa)) is the RCK N-terminal domain. The RCK C-terminal domain maps to 134-221 (HGLENEIINL…LNKYLNYINP (88 aa)).

This is an uncharacterized protein from Mycoplasma genitalium (strain ATCC 33530 / DSM 19775 / NCTC 10195 / G37) (Mycoplasmoides genitalium).